Reading from the N-terminus, the 378-residue chain is MTSPRKTHPLMKIINSSFIDLPTPSNISSWWNFGSLLGACLMIQITTGLFLAMHYTPDTSTAFSSVAHITRDINYGWMIRLLHANGASMFFVCLFLHTGRGLYYGSFLFLNTWNIGTILLLMTMATAFMGYVLPWGQMSFWGATVITNLLSAIPYTGHNLVQWIWGGFSVDKPTLTRFFTFHFILPFIITALATIHLLFLHETGSNNPSGMASSPDKIMFHPYYTTKDIFGLTLLLLLLTSLTLFTPDLLTDPDNYTLANPLNTPPHIKPEWYFLFAYTILRSIPNKLGGVLALLLSIMILTIIPATHLSKQQSMMFRPITQILFWTLAADLLTLTWIGGQPVEYPFEAIGQTASIAYFLIITLIPLSALTENKLLKW.

The next 4 membrane-spanning stretches (helical) occupy residues 33–53 (FGSL…FLAM), 77–98 (WMIR…FLHT), 113–133 (WNIG…GYVL), and 178–198 (FFTF…IHLL). Positions 83 and 97 each coordinate heme b. Residues His-182 and His-196 each contribute to the heme b site. His-201 provides a ligand contact to a ubiquinone. 4 helical membrane-spanning segments follow: residues 226–246 (TKDI…TLFT), 288–308 (LGGV…PATH), 320–340 (ITQI…WIGG), and 347–366 (FEAI…TLIP).

The protein belongs to the cytochrome b family. In terms of assembly, the cytochrome bc1 complex contains 11 subunits: 3 respiratory subunits (MT-CYB, CYC1 and UQCRFS1), 2 core proteins (UQCRC1 and UQCRC2) and 6 low-molecular weight proteins (UQCRH/QCR6, UQCRB/QCR7, UQCRQ/QCR8, UQCR10/QCR9, UQCR11/QCR10 and a cleavage product of UQCRFS1). This cytochrome bc1 complex then forms a dimer. Requires heme b as cofactor.

It localises to the mitochondrion inner membrane. Functionally, component of the ubiquinol-cytochrome c reductase complex (complex III or cytochrome b-c1 complex) that is part of the mitochondrial respiratory chain. The b-c1 complex mediates electron transfer from ubiquinol to cytochrome c. Contributes to the generation of a proton gradient across the mitochondrial membrane that is then used for ATP synthesis. In Cebus albifrons (White-fronted capuchin), this protein is Cytochrome b (MT-CYB).